A 209-amino-acid chain; its full sequence is uncharacterized protein (209 aa).

Residues S119 and H160 each act as charge relay system in the active site.

Belongs to the peptidase S51 family.

This is an uncharacterized protein from Listeria innocua serovar 6a (strain ATCC BAA-680 / CLIP 11262).